The primary structure comprises 149 residues: Large ribosomal subunit protein eL8 (149 aa).

This sequence belongs to the eukaryotic ribosomal protein eL8 family. As to quaternary structure, part of the 50S ribosomal subunit. Probably part of the RNase P complex.

The protein resides in the cytoplasm. Functionally, multifunctional RNA-binding protein that recognizes the K-turn motif in ribosomal RNA, the RNA component of RNase P, box H/ACA, box C/D and box C'/D' sRNAs. This chain is Large ribosomal subunit protein eL8, found in Pyrobaculum calidifontis (strain DSM 21063 / JCM 11548 / VA1).